The sequence spans 106 residues: Trp operon repressor homolog (106 aa).

A DNA-binding region spans residues 59 to 82; the sequence is QREIQQILNTSAATITRGSNMIKI.

Belongs to the TrpR family. Homodimer.

It localises to the cytoplasm. In terms of biological role, this protein is an aporepressor. When complexed with L-tryptophan it binds the operator region of the trp operon and prevents the initiation of transcription. The polypeptide is Trp operon repressor homolog (Histophilus somni (strain 129Pt) (Haemophilus somnus)).